The chain runs to 229 residues: GTP cyclohydrolase 1 (229 aa).

Residues 1-21 (MDAKIKPLRAGKSADARTDFQ) form a disordered region. The Zn(2+) site is built by Cys118, His121, and Cys189.

This sequence belongs to the GTP cyclohydrolase I family. In terms of assembly, toroid-shaped homodecamer, composed of two pentamers of five dimers.

It catalyses the reaction GTP + H2O = 7,8-dihydroneopterin 3'-triphosphate + formate + H(+). Its pathway is cofactor biosynthesis; 7,8-dihydroneopterin triphosphate biosynthesis; 7,8-dihydroneopterin triphosphate from GTP: step 1/1. This chain is GTP cyclohydrolase 1, found in Rhodopseudomonas palustris (strain HaA2).